Here is a 248-residue protein sequence, read N- to C-terminus: 3-deoxy-manno-octulosonate cytidylyltransferase (248 aa).

The protein belongs to the KdsB family.

It localises to the cytoplasm. It catalyses the reaction 3-deoxy-alpha-D-manno-oct-2-ulosonate + CTP = CMP-3-deoxy-beta-D-manno-octulosonate + diphosphate. The protein operates within nucleotide-sugar biosynthesis; CMP-3-deoxy-D-manno-octulosonate biosynthesis; CMP-3-deoxy-D-manno-octulosonate from 3-deoxy-D-manno-octulosonate and CTP: step 1/1. It functions in the pathway bacterial outer membrane biogenesis; lipopolysaccharide biosynthesis. Its function is as follows. Activates KDO (a required 8-carbon sugar) for incorporation into bacterial lipopolysaccharide in Gram-negative bacteria. The polypeptide is 3-deoxy-manno-octulosonate cytidylyltransferase (Leptospira interrogans serogroup Icterohaemorrhagiae serovar copenhageni (strain Fiocruz L1-130)).